The sequence spans 189 residues: UPF0301 protein PputGB1_5045 (189 aa).

The protein belongs to the UPF0301 (AlgH) family.

This chain is UPF0301 protein PputGB1_5045, found in Pseudomonas putida (strain GB-1).